A 221-amino-acid polypeptide reads, in one-letter code: Enolase-phosphatase E1 (221 aa).

Belongs to the HAD-like hydrolase superfamily. MasA/MtnC family. As to quaternary structure, monomer. Mg(2+) is required as a cofactor.

The catalysed reaction is 5-methylsulfanyl-2,3-dioxopentyl phosphate + H2O = 1,2-dihydroxy-5-(methylsulfanyl)pent-1-en-3-one + phosphate. The protein operates within amino-acid biosynthesis; L-methionine biosynthesis via salvage pathway; L-methionine from S-methyl-5-thio-alpha-D-ribose 1-phosphate: step 3/6. Its pathway is amino-acid biosynthesis; L-methionine biosynthesis via salvage pathway; L-methionine from S-methyl-5-thio-alpha-D-ribose 1-phosphate: step 4/6. Its function is as follows. Bifunctional enzyme that catalyzes the enolization of 2,3-diketo-5-methylthiopentyl-1-phosphate (DK-MTP-1-P) into the intermediate 2-hydroxy-3-keto-5-methylthiopentenyl-1-phosphate (HK-MTPenyl-1-P), which is then dephosphorylated to form the acireductone 1,2-dihydroxy-3-keto-5-methylthiopentene (DHK-MTPene). This is Enolase-phosphatase E1 from Xanthobacter autotrophicus (strain ATCC BAA-1158 / Py2).